A 233-amino-acid polypeptide reads, in one-letter code: Pathogenesis-related thaumatin-like protein 3.2 (233 aa).

Positions 1–22 are cleaved as a signal peptide; sequence MARAMHTVWIALVPTLFVFLQG. Intrachain disulfides connect Cys-36–Cys-232, Cys-77–Cys-87, Cys-92–Cys-98, Cys-145–Cys-221, Cys-151–Cys-204, Cys-159–Cys-169, Cys-173–Cys-182, and Cys-183–Cys-191. Asn-195 carries N-linked (GlcNAc...) asparagine glycosylation.

It belongs to the thaumatin family. In terms of tissue distribution, strongly expressed in roots and in female and male strobili, and, to a lower extent, in cotyledons, leaves, stems and pollen grains.

Functionally, may be involved in disease resistance. The protein is Pathogenesis-related thaumatin-like protein 3.2 of Cryptomeria japonica (Japanese cedar).